A 178-amino-acid polypeptide reads, in one-letter code: Large ribosomal subunit protein uL5 (178 aa).

It belongs to the universal ribosomal protein uL5 family. Part of the 50S ribosomal subunit; part of the 5S rRNA/L5/L18/L25 subcomplex. Contacts the 5S rRNA and the P site tRNA. Forms a bridge to the 30S subunit in the 70S ribosome.

Its function is as follows. This is one of the proteins that bind and probably mediate the attachment of the 5S RNA into the large ribosomal subunit, where it forms part of the central protuberance. In the 70S ribosome it contacts protein S13 of the 30S subunit (bridge B1b), connecting the 2 subunits; this bridge is implicated in subunit movement. Contacts the P site tRNA; the 5S rRNA and some of its associated proteins might help stabilize positioning of ribosome-bound tRNAs. In Prochlorococcus marinus (strain MIT 9515), this protein is Large ribosomal subunit protein uL5.